A 435-amino-acid polypeptide reads, in one-letter code: 3-phosphoshikimate 1-carboxyvinyltransferase (435 aa).

Positions 15, 16, and 20 each coordinate 3-phosphoshikimate. Position 15 (lysine 15) interacts with phosphoenolpyruvate. The phosphoenolpyruvate site is built by glycine 96 and arginine 124. 3-phosphoshikimate is bound by residues serine 169, glutamine 171, serine 195, aspartate 318, and lysine 345. Glutamine 171 is a phosphoenolpyruvate binding site. Aspartate 318 functions as the Proton acceptor in the catalytic mechanism. Phosphoenolpyruvate contacts are provided by arginine 349 and arginine 393.

Belongs to the EPSP synthase family. In terms of assembly, monomer.

The protein resides in the cytoplasm. The enzyme catalyses 3-phosphoshikimate + phosphoenolpyruvate = 5-O-(1-carboxyvinyl)-3-phosphoshikimate + phosphate. It participates in metabolic intermediate biosynthesis; chorismate biosynthesis; chorismate from D-erythrose 4-phosphate and phosphoenolpyruvate: step 6/7. In terms of biological role, catalyzes the transfer of the enolpyruvyl moiety of phosphoenolpyruvate (PEP) to the 5-hydroxyl of shikimate-3-phosphate (S3P) to produce enolpyruvyl shikimate-3-phosphate and inorganic phosphate. This chain is 3-phosphoshikimate 1-carboxyvinyltransferase, found in Chlorobium chlorochromatii (strain CaD3).